A 463-amino-acid chain; its full sequence is Sodium-coupled neutral amino acid transporter 7 (463 aa).

The residue at position 28 (Ser-28) is a Phosphoserine. The next 11 membrane-spanning stretches (helical) occupy residues 56–76 (AIFI…PAAF), 82–102 (VAAG…GLVI), 130–150 (LCEV…LIII), 179–199 (FTIS…REIG), 206–226 (FLSV…YIWP), 240–260 (ASWI…QCHV), 283–303 (AAMV…FLTF), 320–340 (MAVA…YPIL), 372–392 (VLQT…IPDI), 396–416 (ISVI…LCLI), and 429–449 (ASWW…AFIF).

This sequence belongs to the amino acid/polyamine transporter 2 family. In terms of assembly, interacts with the mTORC1 complex; this interaction mediates the recruitment of mTORC1 to the lysosome and its subsequent activation.

It localises to the lysosome membrane. Its subcellular location is the cell projection. The protein localises to the axon. The catalysed reaction is L-asparagine(in) + Na(+)(in) = L-asparagine(out) + Na(+)(out). It catalyses the reaction L-glutamine(in) + Na(+)(in) = L-glutamine(out) + Na(+)(out). In terms of biological role, symporter that selectively cotransports sodium ions and amino acids, such as L-glutamine and L-asparagine from the lysosome into the cytoplasm and may participates in mTORC1 activation. The transport activity requires an acidic lysosomal lumen. This is Sodium-coupled neutral amino acid transporter 7 from Bos taurus (Bovine).